The following is a 95-amino-acid chain: Small ribosomal subunit protein bS6 (95 aa).

This sequence belongs to the bacterial ribosomal protein bS6 family.

Functionally, binds together with bS18 to 16S ribosomal RNA. In Nocardia farcinica (strain IFM 10152), this protein is Small ribosomal subunit protein bS6.